A 207-amino-acid polypeptide reads, in one-letter code: Dephospho-CoA kinase (207 aa).

The DPCK domain occupies isoleucine 5–asparagine 207. Residue alanine 13–alanine 18 participates in ATP binding.

The protein belongs to the CoaE family.

The protein localises to the cytoplasm. It catalyses the reaction 3'-dephospho-CoA + ATP = ADP + CoA + H(+). It participates in cofactor biosynthesis; coenzyme A biosynthesis; CoA from (R)-pantothenate: step 5/5. Catalyzes the phosphorylation of the 3'-hydroxyl group of dephosphocoenzyme A to form coenzyme A. The protein is Dephospho-CoA kinase of Xanthomonas campestris pv. campestris (strain ATCC 33913 / DSM 3586 / NCPPB 528 / LMG 568 / P 25).